The chain runs to 153 residues: 3-hydroxyacyl-[acyl-carrier-protein] dehydratase FabZ (153 aa).

Residue histidine 47 is part of the active site.

The protein belongs to the thioester dehydratase family. FabZ subfamily.

Its subcellular location is the cytoplasm. It carries out the reaction a (3R)-hydroxyacyl-[ACP] = a (2E)-enoyl-[ACP] + H2O. Functionally, involved in unsaturated fatty acids biosynthesis. Catalyzes the dehydration of short chain beta-hydroxyacyl-ACPs and long chain saturated and unsaturated beta-hydroxyacyl-ACPs. In Dichelobacter nodosus (strain VCS1703A), this protein is 3-hydroxyacyl-[acyl-carrier-protein] dehydratase FabZ.